The sequence spans 264 residues: S-adenosylmethionine decarboxylase proenzyme (264 aa).

The active-site Schiff-base intermediate with substrate; via pyruvic acid is Ser-112. A Pyruvic acid (Ser); by autocatalysis modification is found at Ser-112. Residue His-117 is the Proton acceptor; for processing activity of the active site. Cys-140 serves as the catalytic Proton donor; for catalytic activity.

It belongs to the prokaryotic AdoMetDC family. Type 2 subfamily. As to quaternary structure, heterooctamer of four alpha and four beta chains arranged as a tetramer of alpha/beta heterodimers. Pyruvate is required as a cofactor. Is synthesized initially as an inactive proenzyme. Formation of the active enzyme involves a self-maturation process in which the active site pyruvoyl group is generated from an internal serine residue via an autocatalytic post-translational modification. Two non-identical subunits are generated from the proenzyme in this reaction, and the pyruvate is formed at the N-terminus of the alpha chain, which is derived from the carboxyl end of the proenzyme. The post-translation cleavage follows an unusual pathway, termed non-hydrolytic serinolysis, in which the side chain hydroxyl group of the serine supplies its oxygen atom to form the C-terminus of the beta chain, while the remainder of the serine residue undergoes an oxidative deamination to produce ammonia and the pyruvoyl group blocking the N-terminus of the alpha chain.

The enzyme catalyses S-adenosyl-L-methionine + H(+) = S-adenosyl 3-(methylsulfanyl)propylamine + CO2. It functions in the pathway amine and polyamine biosynthesis; S-adenosylmethioninamine biosynthesis; S-adenosylmethioninamine from S-adenosyl-L-methionine: step 1/1. In terms of biological role, catalyzes the decarboxylation of S-adenosylmethionine to S-adenosylmethioninamine (dcAdoMet), the propylamine donor required for the synthesis of the polyamines spermine and spermidine from the diamine putrescine. In Serratia proteamaculans (strain 568), this protein is S-adenosylmethionine decarboxylase proenzyme.